The chain runs to 82 residues: Teratocyte protein CftICK-IV (82 aa).

A signal peptide spans 1–21 (MAKILLTFIILTCLIVTITPA).

Contains 4 disulfide bonds. As to expression, abundantly expressed by teratocytes, which are extra-embryonic cells released by parasitoid wasps into their hosts during larval eclosion.

It is found in the secreted. Its function is as follows. This endoparasitoid wasp peptide has immununosuppressive and insecticidal activities. Suppress cellular immunity which is detectable as a reduction of hemocyte spread index in the host. In vivo, ingestion of this peptide moderately reduces leaf consumption of D.saccharalis, a permissive host for the lepidoptere C.flavipes. The polypeptide is Teratocyte protein CftICK-IV (Cotesia flavipes (Parasitic wasp)).